The primary structure comprises 37 residues: Cytochrome b6-f complex subunit 5 (37 aa).

A helical transmembrane segment spans residues 5–25 (LLDGLVLGLVFATLGGLFYAA).

The protein belongs to the PetG family. As to quaternary structure, the 4 large subunits of the cytochrome b6-f complex are cytochrome b6, subunit IV (17 kDa polypeptide, PetD), cytochrome f and the Rieske protein, while the 4 small subunits are PetG, PetL, PetM and PetN. The complex functions as a dimer.

It localises to the cellular thylakoid membrane. Functionally, component of the cytochrome b6-f complex, which mediates electron transfer between photosystem II (PSII) and photosystem I (PSI), cyclic electron flow around PSI, and state transitions. PetG is required for either the stability or assembly of the cytochrome b6-f complex. This chain is Cytochrome b6-f complex subunit 5, found in Mastigocladus laminosus (Fischerella sp.).